A 227-amino-acid polypeptide reads, in one-letter code: Cytochrome c oxidase subunit 2 (227 aa).

Residues 1 to 14 (MAYPHQLGFQDATS) are Mitochondrial intermembrane-facing. A helical membrane pass occupies residues 15 to 45 (PIMEELLSFHDHTLMIVFLISSLVLYLISLM). Residues 46–59 (LTTKLTHTSTMDAQ) are Mitochondrial matrix-facing. A helical transmembrane segment spans residues 60 to 87 (EVETVWTILPAIILIMIALPSLRILYMM). The Mitochondrial intermembrane segment spans residues 88-227 (DEINNPLLTV…SFENWTTSMT (140 aa)). His161, Cys196, Glu198, Cys200, His204, and Met207 together coordinate Cu cation. Glu198 is a binding site for Mg(2+).

Belongs to the cytochrome c oxidase subunit 2 family. Component of the cytochrome c oxidase (complex IV, CIV), a multisubunit enzyme composed of 14 subunits. The complex is composed of a catalytic core of 3 subunits MT-CO1, MT-CO2 and MT-CO3, encoded in the mitochondrial DNA, and 11 supernumerary subunits COX4I, COX5A, COX5B, COX6A, COX6B, COX6C, COX7A, COX7B, COX7C, COX8 and NDUFA4, which are encoded in the nuclear genome. The complex exists as a monomer or a dimer and forms supercomplexes (SCs) in the inner mitochondrial membrane with NADH-ubiquinone oxidoreductase (complex I, CI) and ubiquinol-cytochrome c oxidoreductase (cytochrome b-c1 complex, complex III, CIII), resulting in different assemblies (supercomplex SCI(1)III(2)IV(1) and megacomplex MCI(2)III(2)IV(2)). Found in a complex with TMEM177, COA6, COX18, COX20, SCO1 and SCO2. Interacts with TMEM177 in a COX20-dependent manner. Interacts with COX20. Interacts with COX16. Requires Cu cation as cofactor.

The protein resides in the mitochondrion inner membrane. The enzyme catalyses 4 Fe(II)-[cytochrome c] + O2 + 8 H(+)(in) = 4 Fe(III)-[cytochrome c] + 2 H2O + 4 H(+)(out). Component of the cytochrome c oxidase, the last enzyme in the mitochondrial electron transport chain which drives oxidative phosphorylation. The respiratory chain contains 3 multisubunit complexes succinate dehydrogenase (complex II, CII), ubiquinol-cytochrome c oxidoreductase (cytochrome b-c1 complex, complex III, CIII) and cytochrome c oxidase (complex IV, CIV), that cooperate to transfer electrons derived from NADH and succinate to molecular oxygen, creating an electrochemical gradient over the inner membrane that drives transmembrane transport and the ATP synthase. Cytochrome c oxidase is the component of the respiratory chain that catalyzes the reduction of oxygen to water. Electrons originating from reduced cytochrome c in the intermembrane space (IMS) are transferred via the dinuclear copper A center (CU(A)) of subunit 2 and heme A of subunit 1 to the active site in subunit 1, a binuclear center (BNC) formed by heme A3 and copper B (CU(B)). The BNC reduces molecular oxygen to 2 water molecules using 4 electrons from cytochrome c in the IMS and 4 protons from the mitochondrial matrix. The protein is Cytochrome c oxidase subunit 2 (MT-CO2) of Georychus capensis (Cape mole rat).